The primary structure comprises 319 residues: HPr kinase/phosphorylase (319 aa).

Catalysis depends on residues His144 and Lys165. 159-166 (GKSGIGKS) lines the ATP pocket. Residue Ser166 coordinates Mg(2+). The active-site Proton acceptor; for phosphorylation activity. Proton donor; for dephosphorylation activity is Asp183. The interval 207 to 216 (MEIRGLGVIN) is important for the catalytic mechanism of both phosphorylation and dephosphorylation. A Mg(2+)-binding site is contributed by Glu208. The active site involves Arg249. An important for the catalytic mechanism of dephosphorylation region spans residues 270–275 (PVRPGR).

The protein belongs to the HPrK/P family. As to quaternary structure, homohexamer. Mg(2+) is required as a cofactor.

It carries out the reaction [HPr protein]-L-serine + ATP = [HPr protein]-O-phospho-L-serine + ADP + H(+). It catalyses the reaction [HPr protein]-O-phospho-L-serine + phosphate + H(+) = [HPr protein]-L-serine + diphosphate. In terms of biological role, catalyzes the ATP- as well as the pyrophosphate-dependent phosphorylation of a specific serine residue in HPr, a phosphocarrier protein of the phosphoenolpyruvate-dependent sugar phosphotransferase system (PTS). HprK/P also catalyzes the pyrophosphate-producing, inorganic phosphate-dependent dephosphorylation (phosphorolysis) of seryl-phosphorylated HPr (P-Ser-HPr). The chain is HPr kinase/phosphorylase from Geobacter sulfurreducens (strain ATCC 51573 / DSM 12127 / PCA).